An 843-amino-acid chain; its full sequence is Protein P (843 aa).

The terminal protein domain (TP) stretch occupies residues 1-177 (MPLSYQHFRK…FCGSPYSWEQ (177 aa)). The segment at 178–346 (ELQHGRLVFQ…YCLTHIVNLL (169 aa)) is spacer. 2 disordered regions span residues 224–273 (GLQP…SSTS) and 288–316 (HLST…RSQS). The segment covering 288 to 299 (HLSTSKRQSSSG) has biased composition (polar residues). The interval 347 to 690 (EDWGPCTEHG…YLNLYPVARQ (344 aa)) is polymerase/reverse transcriptase domain (RT). The region spanning 357-600 (EHNIRIPRTP…YSLNFMGYVI (244 aa)) is the Reverse transcriptase domain. Positions 429, 551, and 552 each coordinate Mg(2+).

Belongs to the hepadnaviridae P protein family.

It catalyses the reaction DNA(n) + a 2'-deoxyribonucleoside 5'-triphosphate = DNA(n+1) + diphosphate. The catalysed reaction is Endonucleolytic cleavage to 5'-phosphomonoester.. With respect to regulation, activated by host HSP70 and HSP40 in vitro to be able to bind the epsilon loop of the pgRNA. Because deletion of the RNase H region renders the protein partly chaperone-independent, the chaperones may be needed indirectly to relieve occlusion of the RNA-binding site by this domain. Inhibited by several reverse-transcriptase inhibitors: Lamivudine, Adefovir and Entecavir. Multifunctional enzyme that converts the viral RNA genome into dsDNA in viral cytoplasmic capsids. This enzyme displays a DNA polymerase activity that can copy either DNA or RNA templates, and a ribonuclease H (RNase H) activity that cleaves the RNA strand of RNA-DNA heteroduplexes in a partially processive 3'- to 5'-endonucleasic mode. Neo-synthesized pregenomic RNA (pgRNA) are encapsidated together with the P protein, and reverse-transcribed inside the nucleocapsid. Initiation of reverse-transcription occurs first by binding the epsilon loop on the pgRNA genome, and is initiated by protein priming, thereby the 5'-end of (-)DNA is covalently linked to P protein. Partial (+)DNA is synthesized from the (-)DNA template and generates the relaxed circular DNA (RC-DNA) genome. After budding and infection, the RC-DNA migrates in the nucleus, and is converted into a plasmid-like covalently closed circular DNA (cccDNA). The activity of P protein does not seem to be necessary for cccDNA generation, and is presumably released from (+)DNA by host nuclear DNA repair machinery. The chain is Protein P from Homo sapiens (Human).